A 592-amino-acid chain; its full sequence is ATP-dependent RNA helicase DBP3 (592 aa).

The tract at residues 1 to 146 (MGKRPIEDDA…AGSYTEHTEL (146 aa)) is disordered. Positions 19–31 (KKSKKEKSGKSKK) are enriched in basic residues. The segment covering 73 to 82 (EAKEASKAGK) has biased composition (basic and acidic residues). Positions 97–108 (AARKAARKAEKK) are enriched in basic residues. Residues 116 to 141 (TASSAPTEASSVPAQTLSSSNAGSYT) are compositionally biased toward polar residues. Positions 179–206 (VNFKYLPVTDESQRAPFAGFTAPTPIQA) match the Q motif motif. One can recognise a Helicase ATP-binding domain in the interval 209–382 (WPFLLSGRDM…STFMVSPVRI (174 aa)). Residue 222 to 229 (AETGSGKT) coordinates ATP. The short motif at 330–333 (DEAD) is the DEAD box element. In terms of domain architecture, Helicase C-terminal spans 413 to 562 (RLLQLLKQYQ…EVPEELLKFG (150 aa)).

This sequence belongs to the DEAD box helicase family. DDX5/DBP2 subfamily.

Its subcellular location is the nucleus. The protein resides in the nucleolus. It catalyses the reaction ATP + H2O = ADP + phosphate + H(+). ATP-dependent RNA helicase required for 60S ribosomal subunit synthesis. Involved in efficient pre-rRNA processing, predominantly at site A3, which is necessary for the normal formation of 25S and 5.8S rRNAs. The sequence is that of ATP-dependent RNA helicase DBP3 (DBP3) from Phaeosphaeria nodorum (strain SN15 / ATCC MYA-4574 / FGSC 10173) (Glume blotch fungus).